The chain runs to 86 residues: MKASMFLALAGLALLFVVCYASESEEKEFSNELLSSVLAVDDNSKGEERECLGFGKGCNPSNDQCCKSSNLVCSRKHRWCKYEIGK.

Positions 1–21 (MKASMFLALAGLALLFVVCYA) are cleaved as a signal peptide. Residues 22 to 49 (SESEEKEFSNELLSSVLAVDDNSKGEER) constitute a propeptide that is removed on maturation. Cystine bridges form between Cys51-Cys66, Cys58-Cys73, and Cys65-Cys80. The residue at position 84 (Ile84) is an Isoleucine amide.

Belongs to the neurotoxin 10 (Hwtx-1) family. 22 (Htx-4) subfamily. In terms of assembly, monomer. As to expression, expressed by the venom gland.

It is found in the secreted. Functionally, neurotoxin that selectively inhibits neuronal tetrodotoxin-sensitive voltage-gated sodium channels (Nav) (IC(50)=44.6 nM). It is active on Nav1.2/SCN2A (IC(50)=22.4 nM), Nav1.6/SCN8A (IC(50)=50.1 nM) and Nav1.7/SCN9A (IC(50)=48.9 nM). It shows low affinity for lipid bilayers. The protein is Mu-theraphotoxin-Hhn1b 1 of Cyriopagopus hainanus (Chinese bird spider).